Here is a 103-residue protein sequence, read N- to C-terminus: Small ribosomal subunit protein bS6c (103 aa).

Belongs to the bacterial ribosomal protein bS6 family.

Its subcellular location is the plastid. The protein localises to the chloroplast. Its function is as follows. Binds together with bS18 to 16S ribosomal RNA. This chain is Small ribosomal subunit protein bS6c (rps6), found in Cyanidium caldarium (Red alga).